Here is a 390-residue protein sequence, read N- to C-terminus: Phosphopentomutase (390 aa).

Mn(2+)-binding residues include aspartate 10, aspartate 284, histidine 289, aspartate 325, histidine 326, and histidine 337.

Belongs to the phosphopentomutase family. Mn(2+) is required as a cofactor.

Its subcellular location is the cytoplasm. It catalyses the reaction 2-deoxy-alpha-D-ribose 1-phosphate = 2-deoxy-D-ribose 5-phosphate. It carries out the reaction alpha-D-ribose 1-phosphate = D-ribose 5-phosphate. The protein operates within carbohydrate degradation; 2-deoxy-D-ribose 1-phosphate degradation; D-glyceraldehyde 3-phosphate and acetaldehyde from 2-deoxy-alpha-D-ribose 1-phosphate: step 1/2. Its function is as follows. Isomerase that catalyzes the conversion of deoxy-ribose 1-phosphate (dRib-1-P) and ribose 1-phosphate (Rib-1-P) to deoxy-ribose 5-phosphate (dRib-5-P) and ribose 5-phosphate (Rib-5-P), respectively. The chain is Phosphopentomutase from Clostridioides difficile (strain 630) (Peptoclostridium difficile).